The primary structure comprises 228 residues: Ribulose-phosphate 3-epimerase (228 aa).

Serine 12 is a substrate binding site. A divalent metal cation is bound by residues histidine 37, aspartate 39, and histidine 70. Aspartate 39 functions as the Proton acceptor in the catalytic mechanism. Residues histidine 70, 146–149 (GFGG), 176–178 (DGG), and 198–199 (GS) each bind substrate. An a divalent metal cation-binding site is contributed by aspartate 176. Aspartate 176 functions as the Proton donor in the catalytic mechanism.

Belongs to the ribulose-phosphate 3-epimerase family. A divalent metal cation is required as a cofactor.

It catalyses the reaction D-ribulose 5-phosphate = D-xylulose 5-phosphate. The protein operates within carbohydrate degradation. Its function is as follows. Catalyzes the reversible epimerization of D-ribulose 5-phosphate to D-xylulose 5-phosphate. The protein is Ribulose-phosphate 3-epimerase of Rhodobacter capsulatus (Rhodopseudomonas capsulata).